The chain runs to 89 residues: DNA/RNA-binding protein Alba 1 (89 aa).

The protein belongs to the histone-like Alba family.

Its subcellular location is the cytoplasm. The protein localises to the chromosome. Functionally, binds double-stranded DNA tightly but without sequence specificity. Involved in DNA compaction. In Archaeoglobus fulgidus (strain ATCC 49558 / DSM 4304 / JCM 9628 / NBRC 100126 / VC-16), this protein is DNA/RNA-binding protein Alba 1.